Here is a 165-residue protein sequence, read N- to C-terminus: Putative pre-16S rRNA nuclease (165 aa).

The protein belongs to the YqgF nuclease family.

Its subcellular location is the cytoplasm. Functionally, could be a nuclease involved in processing of the 5'-end of pre-16S rRNA. This chain is Putative pre-16S rRNA nuclease, found in Brucella anthropi (strain ATCC 49188 / DSM 6882 / CCUG 24695 / JCM 21032 / LMG 3331 / NBRC 15819 / NCTC 12168 / Alc 37) (Ochrobactrum anthropi).